A 25-amino-acid chain; its full sequence is Small ribosomal subunit protein eS32 (25 aa).

The interval 1–25 (MREKWKKKRSRRLRRKRRKMRARSK) is disordered.

Belongs to the eukaryotic ribosomal protein eS32 family. As to quaternary structure, component of the large ribosomal subunit.

The chain is Small ribosomal subunit protein eS32 (rpl41) from Agaricus bisporus (White button mushroom).